The following is a 286-amino-acid chain: Bifunctional protein FolD (286 aa).

NADP(+)-binding positions include 164 to 166, isoleucine 189, and isoleucine 230; that span reads GAS.

Belongs to the tetrahydrofolate dehydrogenase/cyclohydrolase family. Homodimer.

The catalysed reaction is (6R)-5,10-methylene-5,6,7,8-tetrahydrofolate + NADP(+) = (6R)-5,10-methenyltetrahydrofolate + NADPH. The enzyme catalyses (6R)-5,10-methenyltetrahydrofolate + H2O = (6R)-10-formyltetrahydrofolate + H(+). It functions in the pathway one-carbon metabolism; tetrahydrofolate interconversion. Functionally, catalyzes the oxidation of 5,10-methylenetetrahydrofolate to 5,10-methenyltetrahydrofolate and then the hydrolysis of 5,10-methenyltetrahydrofolate to 10-formyltetrahydrofolate. The polypeptide is Bifunctional protein FolD (Wolinella succinogenes (strain ATCC 29543 / DSM 1740 / CCUG 13145 / JCM 31913 / LMG 7466 / NCTC 11488 / FDC 602W) (Vibrio succinogenes)).